Consider the following 128-residue polypeptide: MENAGGAEGTESGAAACAATDGPTRRAGADSGYAGFWRPWVDAGGKKEEETPNHAAEAMPDGPGMTAASGKLYQFRHPVRLFWPKSKCYDYLYQEAEALLKNFPIQATISFYEDSDSEDEIEDLTCEN.

The interval M1–P63 is disordered. Residues G9–G22 are compositionally biased toward low complexity. The short motif at W37–W40 is the WRPW motif element. The segment at H77–Y112 is ripply homology domain.

Belongs to the ripply family.

It is found in the nucleus. In terms of biological role, plays a role in somitogenesis. Required for somite segregation and establishment of rostrocaudal polarity in somites. This is Protein ripply2 (RIPPLY2) from Homo sapiens (Human).